A 264-amino-acid chain; its full sequence is Thiazole synthase (264 aa).

Lys106 (schiff-base intermediate with DXP) is an active-site residue. 1-deoxy-D-xylulose 5-phosphate contacts are provided by residues Gly167, 193-194 (AG), and 215-216 (NT).

This sequence belongs to the ThiG family. As to quaternary structure, homotetramer. Forms heterodimers with either ThiH or ThiS.

Its subcellular location is the cytoplasm. It carries out the reaction [ThiS sulfur-carrier protein]-C-terminal-Gly-aminoethanethioate + 2-iminoacetate + 1-deoxy-D-xylulose 5-phosphate = [ThiS sulfur-carrier protein]-C-terminal Gly-Gly + 2-[(2R,5Z)-2-carboxy-4-methylthiazol-5(2H)-ylidene]ethyl phosphate + 2 H2O + H(+). The protein operates within cofactor biosynthesis; thiamine diphosphate biosynthesis. Functionally, catalyzes the rearrangement of 1-deoxy-D-xylulose 5-phosphate (DXP) to produce the thiazole phosphate moiety of thiamine. Sulfur is provided by the thiocarboxylate moiety of the carrier protein ThiS. In vitro, sulfur can be provided by H(2)S. The chain is Thiazole synthase from Xanthomonas euvesicatoria pv. vesicatoria (strain 85-10) (Xanthomonas campestris pv. vesicatoria).